Reading from the N-terminus, the 375-residue chain is Phosphate acyltransferase (375 aa).

The disordered stretch occupies residues 354-375 (AQDDATSADADAPGDSETGSTN). Low complexity predominate over residues 356–368 (DDATSADADAPGD).

It belongs to the PlsX family. As to quaternary structure, homodimer. Probably interacts with PlsY.

The protein resides in the cytoplasm. The enzyme catalyses a fatty acyl-[ACP] + phosphate = an acyl phosphate + holo-[ACP]. It functions in the pathway lipid metabolism; phospholipid metabolism. Catalyzes the reversible formation of acyl-phosphate (acyl-PO(4)) from acyl-[acyl-carrier-protein] (acyl-ACP). This enzyme utilizes acyl-ACP as fatty acyl donor, but not acyl-CoA. The polypeptide is Phosphate acyltransferase (Ruegeria sp. (strain TM1040) (Silicibacter sp.)).